The sequence spans 251 residues: Hydroxyacylglutathione hydrolase (251 aa).

Positions 53, 55, 57, 58, 110, 127, and 165 each coordinate Zn(2+).

It belongs to the metallo-beta-lactamase superfamily. Glyoxalase II family. As to quaternary structure, monomer. The cofactor is Zn(2+).

The enzyme catalyses an S-(2-hydroxyacyl)glutathione + H2O = a 2-hydroxy carboxylate + glutathione + H(+). It participates in secondary metabolite metabolism; methylglyoxal degradation; (R)-lactate from methylglyoxal: step 2/2. In terms of biological role, thiolesterase that catalyzes the hydrolysis of S-D-lactoyl-glutathione to form glutathione and D-lactic acid. The chain is Hydroxyacylglutathione hydrolase from Escherichia coli (strain ATCC 8739 / DSM 1576 / NBRC 3972 / NCIMB 8545 / WDCM 00012 / Crooks).